The chain runs to 393 residues: Na(+)/H(+) antiporter NhaA 1 (393 aa).

The next 11 helical transmembrane spans lie at 23–43 (AGGV…NSPF), 58–78 (LSLT…LVGL), 96–116 (MLPG…FTAF), 126–146 (GWAV…SLLG), 155–175 (VFLA…IAIF), 178–198 (AEIS…LFVM), 224–244 (GVHA…KAAP), 265–285 (VAFI…FAGL), 298–318 (IMLG…WLAI), 334–354 (LYGV…IGLL), and 367–387 (IGVL…LRLV).

This sequence belongs to the NhaA Na(+)/H(+) (TC 2.A.33) antiporter family.

It localises to the cell inner membrane. The enzyme catalyses Na(+)(in) + 2 H(+)(out) = Na(+)(out) + 2 H(+)(in). Its function is as follows. Na(+)/H(+) antiporter that extrudes sodium in exchange for external protons. The chain is Na(+)/H(+) antiporter NhaA 1 from Brucella anthropi (strain ATCC 49188 / DSM 6882 / CCUG 24695 / JCM 21032 / LMG 3331 / NBRC 15819 / NCTC 12168 / Alc 37) (Ochrobactrum anthropi).